Reading from the N-terminus, the 126-residue chain is 13 kDa ribonucleoprotein-associated protein (126 aa).

It belongs to the eukaryotic ribosomal protein eL8 family. Component of the U3 snoRNP particle. Binds to the C'/D and B/C motifs in U3 snoRNA. Component of the 25S U4/U6.U5 tri-snRNP particle, a subcomplex of the spliceosome. Binds to the 5' stem-loop of U4 snRNA.

The protein localises to the nucleus. It localises to the nucleolus. Common component of the spliceosome and rRNA processing machinery. In association with the spliceosomal U4/U6.U5 tri-snRNP particle, required for splicing of pre-mRNA. In association with box C/D snoRNPs, required for processing of pre-ribosomal RNA (rRNA) and site-specific 2'-O-methylation of substrate RNAs. Essential for the accumulation and stability of U4 snRNA, U6 snRNA, and box C/D snoRNAs. The protein is 13 kDa ribonucleoprotein-associated protein (SNU13) of Candida glabrata (strain ATCC 2001 / BCRC 20586 / JCM 3761 / NBRC 0622 / NRRL Y-65 / CBS 138) (Yeast).